Reading from the N-terminus, the 134-residue chain is Methylglyoxal synthase (134 aa).

The MGS-like domain maps to 1-134 (MHIALIAHDE…DWRDLRRNDE (134 aa)). Residues His8, Lys12, 34-37 (TGTT), and 54-55 (SG) contribute to the substrate site. Asp60 serves as the catalytic Proton donor/acceptor. His87 contacts substrate.

Belongs to the methylglyoxal synthase family.

The catalysed reaction is dihydroxyacetone phosphate = methylglyoxal + phosphate. Functionally, catalyzes the formation of methylglyoxal from dihydroxyacetone phosphate. This chain is Methylglyoxal synthase, found in Listeria monocytogenes serotype 4b (strain CLIP80459).